Consider the following 68-residue polypeptide: Conotoxin ba14a (68 aa).

An N-terminal signal peptide occupies residues 1–20; sequence MKLSVMFIVALVLSLSMTDG. Residues 21–50 constitute a propeptide that is removed on maturation; the sequence is LPRRAENGGRIFRQHSPDSMDPQTRQIKTR.

Contains 2 disulfide bonds. As to expression, expressed by the venom duct.

It is found in the secreted. In Conus bayani (Bayan's cone), this protein is Conotoxin ba14a.